The sequence spans 599 residues: Dachshund homolog 2 (599 aa).

The interval 69–155 (RMVDMHGMKV…LITRKDFETL (87 aa)) is DACHbox-N. Disordered regions lie at residues 166 to 186 (RQMTRKQAVNSSRPGRPPKRS), 237 to 280 (LQGN…GPQH), and 370 to 409 (RIPESPSPAPSLEENHRPGSQTSSHTSSSVSSSPSQMDHH). Residues 237 to 262 (LQGNGSQNGTESEPDDLNSNTGGSES) show a composition bias toward polar residues. Residues 389–405 (SQTSSHTSSSVSSSPSQ) show a composition bias toward low complexity. The segment at 453–533 (SSVETLLTNI…KTKRKLQEAL (81 aa)) is DACHbox-C. Residues 459–554 (LTNIQGLLKV…QALKQATTSD (96 aa)) adopt a coiled-coil conformation.

The protein belongs to the DACH/dachshund family. In terms of assembly, interacts with SIX6 and EYA2.

It localises to the nucleus. Its function is as follows. Transcription factor that is involved in regulation of organogenesis. Seems to be a regulator for SIX1 and SIX6. Seems to act as a corepressor of SIX6 in regulating proliferation by directly repressing cyclin-dependent kinase inhibitors, including the p27Kip1 promoter. Is recruited with SIX6 to the p27Kip1 promoter in embryonal retina. SIX6 corepression also seems to involve NCOR1, TBL1, HDAC1 and HDAC3. May be involved together with PAX3, SIX1, and EYA2 in regulation of myogenesis. In the developing somite, expression of DACH2 and PAX3 is regulated by the overlying ectoderm, and DACH2 and PAX3 positively regulate each other's expression. Probably binds to DNA via its DACHbox-N domain. This is Dachshund homolog 2 (DACH2) from Homo sapiens (Human).